The chain runs to 443 residues: Enolase B (443 aa).

2 residues coordinate substrate: histidine 156 and glutamate 165. Glutamate 208 serves as the catalytic Proton donor. Mg(2+) contacts are provided by aspartate 243, glutamate 296, and aspartate 323. Residues glutamate 296 and aspartate 323 each coordinate substrate. Lysine 348 (proton acceptor) is an active-site residue. Substrate is bound by residues 375-378 (SHRS) and lysine 399.

The protein belongs to the enolase family. Homodimer. It depends on Mg(2+) as a cofactor.

Its subcellular location is the cytoplasm. It carries out the reaction (2R)-2-phosphoglycerate = phosphoenolpyruvate + H2O. It functions in the pathway carbohydrate degradation; glycolysis; pyruvate from D-glyceraldehyde 3-phosphate: step 4/5. The protein is Enolase B (enoB) of Dictyostelium discoideum (Social amoeba).